The following is a 356-amino-acid chain: Nucleosome assembly protein 1;4 (356 aa).

Residues 34–88 (VNALKNKLQNLAGQHSDILETLTPQVRKRVDVLRELQSQHDELESHFFEERAALE) are a coiled coil. The Nuclear export signal signature appears at 55–70 (LTPQVRKRVDVLRELQ). The short motif at 230-235 (KKKPKK) is the Nuclear localization signal element. Residues 304–356 (FTGEAAEGDEFEDIEDDDDDDDDDDDEDDEDEEDEDDEEEEKSKKKSSALKVE) form a disordered region. The span at 309-343 (AEGDEFEDIEDDDDDDDDDDDEDDEDEEDEDDEEE) shows a compositional bias: acidic residues. A compositionally biased stretch (basic residues) spans 347-356 (KKKSSALKVE).

The protein belongs to the nucleosome assembly protein (NAP) family. As to quaternary structure, can form homomeric and heteromeric protein complexes with NAP1;3. Binds histones H2A and H2B in vivo. Also able to bind histones H1 and H4 in vitro. Interacts with CYCB1;1 and with alpha tubulin.

The protein localises to the nucleus. The protein resides in the cytoplasm. In terms of biological role, may modulate chromatin structure by regulation of nucleosome assembly/disassembly. Could function together with B-type cyclins in the regulation of microtubule dynamics. This Nicotiana tabacum (Common tobacco) protein is Nucleosome assembly protein 1;4 (NAP1;4).